The primary structure comprises 205 residues: MLNLAALLWRRLLRKRWVLALVFGLSLVYFLSSTFKQEERAVRDRNLLQVQDREQPIPWKVQFNLGNSSRPSNQCRNSVQGKHLLTDELGYVCERKDLLANGCCDVSVPSTKQYCCDGCLANGCCEAYEYCVSCCLQPSKQLLLERFLNRAAVAFQNLFMAVEDHFELCLAKCRTSSQSVQHENTYRDPIAKYCYGESPPELFPA.

At 1–16 (MLNLAALLWRRLLRKR) the chain is on the cytoplasmic side. Residues 17–35 (WVLALVFGLSLVYFLSSTF) form a helical membrane-spanning segment. Topologically, residues 36 to 205 (KQEERAVRDR…GESPPELFPA (170 aa)) are lumenal. An N-linked (GlcNAc...) asparagine glycan is attached at Asn67.

This sequence belongs to the SPRING family. Interacts with SCAP. Ubiquitously expressed with a slightly higher expression in the liver and kidney.

The protein resides in the golgi apparatus membrane. Its function is as follows. Positively regulates hepatic SREBP signaling pathway by modulating the proper localization of SCAP (SREBP cleavage-activating protein) to the endoplasmic reticulum, thereby controlling the level of functional SCAP. Plays a crucial role during embryogenesis. In Mus musculus (Mouse), this protein is SREBP regulating gene protein (Spring1).